Here is a 592-residue protein sequence, read N- to C-terminus: Transducer of Cdc42-dependent actin assembly protein 1 homolog (592 aa).

One can recognise an F-BAR domain in the interval 3–267; the sequence is DSCSWDQLWD…DIGLIDPSRD (265 aa). Disordered regions lie at residues 343 to 366 and 447 to 519; these read FGGG…QQRA and SATS…DELY. The REM-1 domain occupies 359–436; that stretch reads TLPPQQRARK…IQKFKILLDD (78 aa). The stretch at 363–441 forms a coiled coil; that stretch reads QQRARKIAGK…ILLDDVNAQL (79 aa). Residues 447–457 show a composition bias toward polar residues; that stretch reads SATSVGGSDTP. Over residues 459–474 the composition is skewed to low complexity; sequence SIRSVSSASSGVTSRV. The span at 495–510 shows a compositional bias: polar residues; sequence FSGSNGGSDTDPTING. Residues 527–589 enclose the SH3 domain; sequence PVLGEAIAQF…PSSYLKVTWF (63 aa).

It belongs to the FNBP1 family. As to quaternary structure, interacts (via SH3 domain) with wsp-1. Interacts with cdc-42 and (via SH3 domain) with wve-1. As to expression, expressed in the germline and specifically in the gonads.

Its subcellular location is the cell junction. The protein localises to the apical cell membrane. The protein resides in the basolateral cell membrane. It is found in the cytoplasmic vesicle. It localises to the cytoplasm. Its subcellular location is the perinuclear region. The protein localises to the recycling endosome. Its function is as follows. Plays a role in protein trafficking, actin organization and embryonic morphogenesis. Potentially acts as a cdc-42 effector. May play a role in hypodermal P-cell nuclear positioning. Together with toca-2, is required for protein trafficking regulating yolk protein clathrin-mediated endocytosis by oocytes during oogenesis and retrograde recycling and the sorting of recycling endosome cargo proteins such as mig-14. Also, together with toca-2, controls the distribution of actin at cell junctions. This Caenorhabditis elegans protein is Transducer of Cdc42-dependent actin assembly protein 1 homolog.